We begin with the raw amino-acid sequence, 275 residues long: Dermonecrotic toxin LruSicTox-alphaIV1 (275 aa).

His5 is an active-site residue. The Mg(2+) site is built by Glu25 and Asp27. The active-site Nucleophile is His41. 2 disulfide bridges follow: Cys45/Cys51 and Cys47/Cys192. Residue Asp85 participates in Mg(2+) binding.

This sequence belongs to the arthropod phospholipase D family. Class II subfamily. Requires Mg(2+) as cofactor. In terms of tissue distribution, expressed by the venom gland.

Its subcellular location is the secreted. The enzyme catalyses an N-(acyl)-sphingosylphosphocholine = an N-(acyl)-sphingosyl-1,3-cyclic phosphate + choline. The catalysed reaction is an N-(acyl)-sphingosylphosphoethanolamine = an N-(acyl)-sphingosyl-1,3-cyclic phosphate + ethanolamine. It carries out the reaction a 1-acyl-sn-glycero-3-phosphocholine = a 1-acyl-sn-glycero-2,3-cyclic phosphate + choline. It catalyses the reaction a 1-acyl-sn-glycero-3-phosphoethanolamine = a 1-acyl-sn-glycero-2,3-cyclic phosphate + ethanolamine. Dermonecrotic toxins cleave the phosphodiester linkage between the phosphate and headgroup of certain phospholipids (sphingolipid and lysolipid substrates), forming an alcohol (often choline) and a cyclic phosphate. This toxin acts on sphingomyelin (SM). It may also act on ceramide phosphoethanolamine (CPE), lysophosphatidylcholine (LPC) and lysophosphatidylethanolamine (LPE), but not on lysophosphatidylserine (LPS), and lysophosphatidylglycerol (LPG). It acts by transphosphatidylation, releasing exclusively cyclic phosphate products as second products. Induces dermonecrosis, hemolysis, increased vascular permeability, edema, inflammatory response, and platelet aggregation. This is Dermonecrotic toxin LruSicTox-alphaIV1 from Loxosceles rufescens (Mediterranean recluse spider).